A 189-amino-acid chain; its full sequence is Cytochrome b6-f complex subunit 4 (189 aa).

3 helical membrane passes run 36-56 (LSYI…GLAV), 103-123 (LLGV…PFLE), and 139-159 (TVSL…ALPI).

It belongs to the cytochrome b family. PetD subfamily. As to quaternary structure, the 4 large subunits of the cytochrome b6-f complex are cytochrome b6, subunit IV (17 kDa polypeptide, petD), cytochrome f and the Rieske protein, while the 4 small subunits are petG, petL, petM and petN. The complex functions as a dimer.

It localises to the plastid. Its subcellular location is the chloroplast thylakoid membrane. Functionally, component of the cytochrome b6-f complex, which mediates electron transfer between photosystem II (PSII) and photosystem I (PSI), cyclic electron flow around PSI, and state transitions. The polypeptide is Cytochrome b6-f complex subunit 4 (Pinus koraiensis (Korean pine)).